A 714-amino-acid polypeptide reads, in one-letter code: Fatty acid oxidation complex subunit alpha (714 aa).

The tract at residues 1-190 is enoyl-CoA hydratase; that stretch reads MEMASAFTLN…KLGLVDDVVP (190 aa). The interval 306–714 is 3-hydroxyacyl-CoA dehydrogenase; the sequence is APLNSVGILG…FWKTTATDLQ (409 aa).

In the N-terminal section; belongs to the enoyl-CoA hydratase/isomerase family. The protein in the central section; belongs to the 3-hydroxyacyl-CoA dehydrogenase family. Heterotetramer of two alpha chains (FadJ) and two beta chains (FadI).

Its subcellular location is the cytoplasm. It carries out the reaction a (3S)-3-hydroxyacyl-CoA = a (2E)-enoyl-CoA + H2O. The catalysed reaction is a 4-saturated-(3S)-3-hydroxyacyl-CoA = a (3E)-enoyl-CoA + H2O. It catalyses the reaction a (3S)-3-hydroxyacyl-CoA + NAD(+) = a 3-oxoacyl-CoA + NADH + H(+). The enzyme catalyses (3S)-3-hydroxybutanoyl-CoA = (3R)-3-hydroxybutanoyl-CoA. Its pathway is lipid metabolism; fatty acid beta-oxidation. In terms of biological role, catalyzes the formation of a hydroxyacyl-CoA by addition of water on enoyl-CoA. Also exhibits 3-hydroxyacyl-CoA epimerase and 3-hydroxyacyl-CoA dehydrogenase activities. The sequence is that of Fatty acid oxidation complex subunit alpha from Shigella boydii serotype 18 (strain CDC 3083-94 / BS512).